A 367-amino-acid chain; its full sequence is Biotin synthase (367 aa).

The 225-residue stretch at 67–291 (NAVQISTLLS…IAVTRICCPS (225 aa)) folds into the Radical SAM core domain. [4Fe-4S] cluster is bound by residues cysteine 82, cysteine 86, and cysteine 89. Residues cysteine 128, cysteine 159, cysteine 219, and arginine 295 each contribute to the [2Fe-2S] cluster site.

The protein belongs to the radical SAM superfamily. Biotin synthase family. As to quaternary structure, homodimer. The cofactor is [4Fe-4S] cluster. [2Fe-2S] cluster serves as cofactor.

The catalysed reaction is (4R,5S)-dethiobiotin + (sulfur carrier)-SH + 2 reduced [2Fe-2S]-[ferredoxin] + 2 S-adenosyl-L-methionine = (sulfur carrier)-H + biotin + 2 5'-deoxyadenosine + 2 L-methionine + 2 oxidized [2Fe-2S]-[ferredoxin]. It participates in cofactor biosynthesis; biotin biosynthesis; biotin from 7,8-diaminononanoate: step 2/2. In terms of biological role, catalyzes the conversion of dethiobiotin (DTB) to biotin by the insertion of a sulfur atom into dethiobiotin via a radical-based mechanism. The polypeptide is Biotin synthase (Psychrobacter sp. (strain PRwf-1)).